Here is a 301-residue protein sequence, read N- to C-terminus: Haloalkane dehalogenase (301 aa).

The active-site Nucleophile is the Asp123. Asp250 functions as the Proton donor in the catalytic mechanism. The Proton acceptor role is filled by His279.

This sequence belongs to the haloalkane dehalogenase family. Type 1 subfamily. Monomer.

The enzyme catalyses 1-haloalkane + H2O = a halide anion + a primary alcohol + H(+). In terms of biological role, catalyzes hydrolytic cleavage of carbon-halogen bonds in halogenated aliphatic compounds, leading to the formation of the corresponding primary alcohols, halide ions and protons. The chain is Haloalkane dehalogenase from Phenylobacterium zucineum (strain HLK1).